Consider the following 400-residue polypeptide: Nicotinate phosphoribosyltransferase (400 aa).

Histidine 220 bears the Phosphohistidine; by autocatalysis mark.

It belongs to the NAPRTase family. In terms of processing, transiently phosphorylated on a His residue during the reaction cycle. Phosphorylation strongly increases the affinity for substrates and increases the rate of nicotinate D-ribonucleotide production. Dephosphorylation regenerates the low-affinity form of the enzyme, leading to product release.

The enzyme catalyses nicotinate + 5-phospho-alpha-D-ribose 1-diphosphate + ATP + H2O = nicotinate beta-D-ribonucleotide + ADP + phosphate + diphosphate. It participates in cofactor biosynthesis; NAD(+) biosynthesis; nicotinate D-ribonucleotide from nicotinate: step 1/1. In terms of biological role, catalyzes the synthesis of beta-nicotinate D-ribonucleotide from nicotinate and 5-phospho-D-ribose 1-phosphate at the expense of ATP. This Shigella dysenteriae serotype 1 (strain Sd197) protein is Nicotinate phosphoribosyltransferase.